The following is a 127-amino-acid chain: Small ribosomal subunit protein uS12 (127 aa).

At aspartate 89 the chain carries 3-methylthioaspartic acid. Residues 101 to 127 (ALDTSGVAGRTQRRSKYGAKRPKEAKK) form a disordered region. Positions 111–127 (TQRRSKYGAKRPKEAKK) are enriched in basic residues.

Belongs to the universal ribosomal protein uS12 family. Part of the 30S ribosomal subunit. Contacts proteins S8 and S17. May interact with IF1 in the 30S initiation complex.

Its function is as follows. With S4 and S5 plays an important role in translational accuracy. In terms of biological role, interacts with and stabilizes bases of the 16S rRNA that are involved in tRNA selection in the A site and with the mRNA backbone. Located at the interface of the 30S and 50S subunits, it traverses the body of the 30S subunit contacting proteins on the other side and probably holding the rRNA structure together. The combined cluster of proteins S8, S12 and S17 appears to hold together the shoulder and platform of the 30S subunit. The protein is Small ribosomal subunit protein uS12 of Flavobacterium psychrophilum (strain ATCC 49511 / DSM 21280 / CIP 103535 / JIP02/86).